Reading from the N-terminus, the 316-residue chain is N-acetyl-gamma-glutamyl-phosphate reductase (316 aa).

C136 is an active-site residue.

This sequence belongs to the NAGSA dehydrogenase family. Type 1 subfamily.

Its subcellular location is the cytoplasm. It catalyses the reaction N-acetyl-L-glutamate 5-semialdehyde + phosphate + NADP(+) = N-acetyl-L-glutamyl 5-phosphate + NADPH + H(+). The protein operates within amino-acid biosynthesis; L-arginine biosynthesis; N(2)-acetyl-L-ornithine from L-glutamate: step 3/4. In terms of biological role, catalyzes the NADPH-dependent reduction of N-acetyl-5-glutamyl phosphate to yield N-acetyl-L-glutamate 5-semialdehyde. This is N-acetyl-gamma-glutamyl-phosphate reductase from Xanthomonas campestris pv. campestris (strain ATCC 33913 / DSM 3586 / NCPPB 528 / LMG 568 / P 25).